The primary structure comprises 317 residues: Acetyl-coenzyme A carboxylase carboxyl transferase subunit beta (317 aa).

The segment at 1 to 28 (MANNMTDTMTKPDINNDSTSLQQNGNKA) is disordered. The 263-residue stretch at 55–317 (PSTKCSSCHS…LCSVPNVDVQ (263 aa)) folds into the CoA carboxyltransferase N-terminal domain. Cys-59, Cys-62, Cys-78, and Cys-81 together coordinate Zn(2+). A C4-type zinc finger spans residues 59 to 81 (CSSCHSIITNTALIFNCYVCPHC).

Belongs to the AccD/PCCB family. As to quaternary structure, acetyl-CoA carboxylase is a heterohexamer composed of biotin carboxyl carrier protein (AccB), biotin carboxylase (AccC) and two subunits each of ACCase subunit alpha (AccA) and ACCase subunit beta (AccD). Zn(2+) is required as a cofactor.

It localises to the cytoplasm. The catalysed reaction is N(6)-carboxybiotinyl-L-lysyl-[protein] + acetyl-CoA = N(6)-biotinyl-L-lysyl-[protein] + malonyl-CoA. It functions in the pathway lipid metabolism; malonyl-CoA biosynthesis; malonyl-CoA from acetyl-CoA: step 1/1. Functionally, component of the acetyl coenzyme A carboxylase (ACC) complex. Biotin carboxylase (BC) catalyzes the carboxylation of biotin on its carrier protein (BCCP) and then the CO(2) group is transferred by the transcarboxylase to acetyl-CoA to form malonyl-CoA. The chain is Acetyl-coenzyme A carboxylase carboxyl transferase subunit beta from Psychrobacter cryohalolentis (strain ATCC BAA-1226 / DSM 17306 / VKM B-2378 / K5).